The sequence spans 243 residues: NH(3)-dependent NAD(+) synthetase (243 aa).

31-38 (GVSGGIDS) serves as a coordination point for ATP. D37 contacts Mg(2+). A deamido-NAD(+)-binding site is contributed by R110. ATP is bound at residue T130. E135 provides a ligand contact to Mg(2+). Deamido-NAD(+) contacts are provided by K143 and D150. The ATP site is built by K159 and S181. Residue 227–228 (HK) coordinates deamido-NAD(+).

The protein belongs to the NAD synthetase family. As to quaternary structure, homodimer.

It carries out the reaction deamido-NAD(+) + NH4(+) + ATP = AMP + diphosphate + NAD(+) + H(+). Its pathway is cofactor biosynthesis; NAD(+) biosynthesis; NAD(+) from deamido-NAD(+) (ammonia route): step 1/1. Catalyzes the ATP-dependent amidation of deamido-NAD to form NAD. Uses ammonia as a nitrogen source. The protein is NH(3)-dependent NAD(+) synthetase of Malacoplasma penetrans (strain HF-2) (Mycoplasma penetrans).